Reading from the N-terminus, the 392-residue chain is MTQHLTAETLRKDFLAVFGQEVDQTFFSPGRINLIGEHTDYNGGHVFPVAISLGTYGAARKRDDQVLRFYSANFEDKGIIEVPLADLKFEKEHNWTNYPKGVLHFLQEAGHVIDKGFDFYVYGNIPNGSGLSSSASLEILTGVVAEHLFDLKLERLDLVKIGKQTENNFIGVNSGIMDQFAIGMGADQRAIYLDTNTLEYDLVPLDLKDNVVVIMNTNKRRELADSKYNERRAECEKAVEELQVALDIQTLGELDEWAVDQYSYLIKDENRLKRARHAVLENQRTLKAQAALQAGDLETFGRLMNASHVSLEHDYEVTGLELDTLVHTAWAQEGVLGARMTGAGFSGCAIALVQKDTVEAFKEAVGKHYEEVVGYAPSFYIAEVAGGTRVLD.

37-40 (EHTD) contributes to the substrate binding site. Residues Ser71 and 128 to 134 (GSGLSSS) each bind ATP. The Mg(2+) site is built by Ser134 and Glu166. The active-site Proton acceptor is Asp178. Tyr228 contributes to the substrate binding site.

Belongs to the GHMP kinase family. GalK subfamily.

The protein resides in the cytoplasm. The catalysed reaction is alpha-D-galactose + ATP = alpha-D-galactose 1-phosphate + ADP + H(+). It participates in carbohydrate metabolism; galactose metabolism. In terms of biological role, catalyzes the transfer of the gamma-phosphate of ATP to D-galactose to form alpha-D-galactose-1-phosphate (Gal-1-P). This Streptococcus pneumoniae (strain ATCC BAA-255 / R6) protein is Galactokinase.